The sequence spans 428 residues: Serine--tRNA ligase (428 aa).

235 to 237 is an L-serine binding site; it reads TAE. 266–268 contributes to the ATP binding site; the sequence is RSE. Position 289 (E289) interacts with L-serine. 353-356 is an ATP binding site; sequence EISS. S389 lines the L-serine pocket.

The protein belongs to the class-II aminoacyl-tRNA synthetase family. Type-1 seryl-tRNA synthetase subfamily. As to quaternary structure, homodimer. The tRNA molecule binds across the dimer.

The protein localises to the cytoplasm. It catalyses the reaction tRNA(Ser) + L-serine + ATP = L-seryl-tRNA(Ser) + AMP + diphosphate + H(+). The enzyme catalyses tRNA(Sec) + L-serine + ATP = L-seryl-tRNA(Sec) + AMP + diphosphate + H(+). Its pathway is aminoacyl-tRNA biosynthesis; selenocysteinyl-tRNA(Sec) biosynthesis; L-seryl-tRNA(Sec) from L-serine and tRNA(Sec): step 1/1. Functionally, catalyzes the attachment of serine to tRNA(Ser). Is also able to aminoacylate tRNA(Sec) with serine, to form the misacylated tRNA L-seryl-tRNA(Sec), which will be further converted into selenocysteinyl-tRNA(Sec). This Psychromonas ingrahamii (strain DSM 17664 / CCUG 51855 / 37) protein is Serine--tRNA ligase.